An 83-amino-acid chain; its full sequence is UPF0297 protein CLK_1948 (83 aa).

It belongs to the UPF0297 family.

The sequence is that of UPF0297 protein CLK_1948 from Clostridium botulinum (strain Loch Maree / Type A3).